The following is a 415-amino-acid chain: METQHSRFLQYITHGSLVKQILLGLAAGIILASLSTQAALAAGLLGTLFVGALKAVAPILVLMLVMASVANHQQGQKTNIRPILFLYLIGTFSAALIAVVLSVLFPSTLALNAQAADITPPSGIVEVLKGLLMSVVANPIHALLNANYIGILVWAVGLGLAFRHGSASTKNLISDASHAVTAIVRVVIRFAPLGIFGLVASTLAETGFGALWGYAHLLMVLIGGMLLVALVINPLIVYWKIRSNPYPLVLRCLRESGVTAFFTRSSAANIPVNMELCRKLNLNEDSYSVAIPLGATINMAGAAITITVLALAAVHTLGIEVDIATALLLSVVASICACGASGVAGGSLLLIPLACSMFGISNDIAMQVVAVGFIIGVLQDSAETALNSSTDVIFTAAVCQAEDAKLAEKERLNLL.

A run of 9 helical transmembrane segments spans residues 21-41 (ILLGLAAGIILASLSTQAALA), 45-65 (LGTLFVGALKAVAPILVLMLV), 83-103 (ILFLYLIGTFSAALIAVVLSV), 142-162 (ALLNANYIGILVWAVGLGLAF), 193-213 (LGIFGLVASTLAETGFGALWG), 217-237 (LLMVLIGGMLLVALVINPLIV), 299-319 (MAGAAITITVLALAAVHTLGI), 331-351 (VVASICACGASGVAGGSLLLI), and 358-378 (FGISNDIAMQVVAVGFIIGVL).

This sequence belongs to the dicarboxylate/amino acid:cation symporter (DAACS) (TC 2.A.23) family.

It is found in the cell inner membrane. The enzyme catalyses L-serine(in) + Na(+)(in) = L-serine(out) + Na(+)(out). It carries out the reaction L-threonine(in) + Na(+)(in) = L-threonine(out) + Na(+)(out). Involved in the import of serine and threonine into the cell, with the concomitant import of sodium (symport system). The protein is Serine/threonine transporter SstT of Pectobacterium carotovorum subsp. carotovorum (strain PC1).